The following is a 178-amino-acid chain: Large ribosomal subunit protein uL6 (178 aa).

The protein belongs to the universal ribosomal protein uL6 family. In terms of assembly, part of the 50S ribosomal subunit.

Its function is as follows. This protein binds to the 23S rRNA, and is important in its secondary structure. It is located near the subunit interface in the base of the L7/L12 stalk, and near the tRNA binding site of the peptidyltransferase center. The protein is Large ribosomal subunit protein uL6 of Nautilia profundicola (strain ATCC BAA-1463 / DSM 18972 / AmH).